The sequence spans 461 residues: Protein eva-1 (461 aa).

The N-terminal stretch at 1–22 (MNMHIVSPVLLLFWFGIIVTDG) is a signal peptide. The SUEL-type lectin domain occupies 55-160 (ACDGERITLS…KYLQMAYGCI (106 aa)). A helical membrane pass occupies residues 370 to 390 (VMCIVLAVSMAAIVVLSACII). Residues 397–429 (NKDSSRSSRRSRSRRSLETSKLVSSNYGGSITP) are disordered. Residues 415–429 (TSKLVSSNYGGSITP) are compositionally biased toward polar residues.

The protein belongs to the EVA1 family. Interacts with sax-3. Interacts with slt-1. Interacts (via the SUEL-type lectin domain) with madd-4. Interacts (via the transmembrane domain) with unc-40.

It is found in the cell membrane. In terms of biological role, acts as a receptor for slt-1. Required for the guidance of the AVM pioneer axon to the ventral nerve cord. Acts as a unc-40 coreceptor to enhance the sensitivity of unc-40 to the madd-4 midline guidance cue to guide muscle arm extensions (muscle arms) and AVM mechanosensory axons towards the dorsoventral midline. This chain is Protein eva-1 (eva-1), found in Caenorhabditis elegans.